The following is a 565-amino-acid chain: CTP synthase (565 aa).

Residues Met1–Pro268 are amidoligase domain. Position 14 (Ser14) interacts with CTP. Residue Ser14 coordinates UTP. Residue Ser15 to Ile20 participates in ATP binding. Tyr55 is a binding site for L-glutamine. An ATP-binding site is contributed by Asp72. Mg(2+) contacts are provided by Asp72 and Glu142. Residues Asp149–Glu151, Lys189–Gln194, and Lys225 each bind CTP. UTP-binding positions include Lys189–Gln194 and Lys225. Positions Pro301–Glu543 constitute a Glutamine amidotransferase type-1 domain. Gly363 contacts L-glutamine. Catalysis depends on Cys390, which acts as the Nucleophile; for glutamine hydrolysis. Residues Leu391–Gln394, Glu414, and Arg471 each bind L-glutamine. Residues His516 and Glu518 contribute to the active site. A disordered region spans residues Asp545–Met565.

It belongs to the CTP synthase family. In terms of assembly, homotetramer.

The enzyme catalyses UTP + L-glutamine + ATP + H2O = CTP + L-glutamate + ADP + phosphate + 2 H(+). The catalysed reaction is L-glutamine + H2O = L-glutamate + NH4(+). It carries out the reaction UTP + NH4(+) + ATP = CTP + ADP + phosphate + 2 H(+). Its pathway is pyrimidine metabolism; CTP biosynthesis via de novo pathway; CTP from UDP: step 2/2. Allosterically activated by GTP, when glutamine is the substrate; GTP has no effect on the reaction when ammonia is the substrate. The allosteric effector GTP functions by stabilizing the protein conformation that binds the tetrahedral intermediate(s) formed during glutamine hydrolysis. Inhibited by the product CTP, via allosteric rather than competitive inhibition. Its function is as follows. Catalyzes the ATP-dependent amination of UTP to CTP with either L-glutamine or ammonia as the source of nitrogen. Regulates intracellular CTP levels through interactions with the four ribonucleotide triphosphates. The protein is CTP synthase of Salinibacter ruber (strain DSM 13855 / M31).